Consider the following 100-residue polypeptide: Protein SAMBA (100 aa).

A disordered region spans residues 1–40 (MNGASPAHSLVSTTAVAGGGGSSGAAAGLDDFHFPPDIPS).

In terms of assembly, interacts with CDC27B and CYCA2-3. As to expression, expressed in embryos, germinating seeds, hypocotyls and pollen grains.

In terms of biological role, plays an important role in organ size control. Acts as negative regulator of the anaphase-promoting complex/cyclosome (APC/C). Regulates cell proliferation during early development by targeting CYCA2-3 for APC/C-mediated degradation. Required for mitosis I during pollen microspore development. The sequence is that of Protein SAMBA from Arabidopsis thaliana (Mouse-ear cress).